A 643-amino-acid polypeptide reads, in one-letter code: COP9 signalosome complex subunit 10 (643 aa).

Acidic residues predominate over residues 1 to 33 (MTDESDNYNDFMMSDEDMDSIEMEDEENDVEGD). A disordered region spans residues 1–37 (MTDESDNYNDFMMSDEDMDSIEMEDEENDVEGDEGQR). The PCI domain occupies 331-517 (CKEEFWECLK…DTVTFYSEQH (187 aa)). The span at 573-584 (DSQSHSKSNTKS) shows a compositional bias: polar residues. The disordered stretch occupies residues 573–594 (DSQSHSKSNTKSMSRHVSGHDP).

As to quaternary structure, component of a COP9 signalosome-like (CSN) complex.

The protein resides in the cytoplasm. It is found in the nucleus. Functionally, component of the COP9 signalosome (CSN) complex that acts as an regulator of the ubiquitin (Ubl) conjugation pathway by mediating the deneddylation of the cullin subunit of SCF-type E3 ubiquitin-protein ligase complexes. The CSN complex is involved in the regulation of the mating pheromone response. This Candida glabrata (strain ATCC 2001 / BCRC 20586 / JCM 3761 / NBRC 0622 / NRRL Y-65 / CBS 138) (Yeast) protein is COP9 signalosome complex subunit 10 (RRI2).